The primary structure comprises 346 residues: Dihydroorotase (346 aa).

Residues His-13 and His-15 each contribute to the Zn(2+) site. Substrate is bound by residues 15–17 (HLR) and Asn-41. The Zn(2+) site is built by Lys-99, His-136, and His-174. N6-carboxylysine is present on Lys-99. His-136 contacts substrate. Leu-219 serves as a coordination point for substrate. Asp-247 is a binding site for Zn(2+). The active site involves Asp-247. His-251 and Ala-263 together coordinate substrate.

This sequence belongs to the metallo-dependent hydrolases superfamily. DHOase family. Class II DHOase subfamily. In terms of assembly, homodimer. Requires Zn(2+) as cofactor.

It catalyses the reaction (S)-dihydroorotate + H2O = N-carbamoyl-L-aspartate + H(+). The protein operates within pyrimidine metabolism; UMP biosynthesis via de novo pathway; (S)-dihydroorotate from bicarbonate: step 3/3. Functionally, catalyzes the reversible cyclization of carbamoyl aspartate to dihydroorotate. This Chelativorans sp. (strain BNC1) protein is Dihydroorotase.